The following is a 271-amino-acid chain: MATELKKGPLPTDIEETVITIMREEGVRYITAKILRMRLESKYQMEFGPHKAAIDDIVARAMQRPEFKKQLELALKEKDASKSSGGKGSKRARSAGAEAPSKTKKEMTEKPKKPADYPKPAVSSYLLFVADQREELKAKNPGMQNTAILQTLGKMWSDASDDVKEHYRKKAEEDKARFRREVDEYKRQGGKEYGRGGKIKKDSNAPKRAMTSFMFFSSDFRSKHSDLSIVEMSKAAGAAWKELGPEERKVYEEMAEKDKERYKREMAALPK.

One can recognise a DEK-C domain in the interval G8–Q63. The segment at L75 to P118 is disordered. Residues S101 to D116 show a composition bias toward basic and acidic residues. 2 consecutive DNA-binding regions (HMG box) follow at residues P118–K186 and P206–P270.

It localises to the nucleus. Its function is as follows. Unknown. May play a role in transcription and/or DNA replication. It is not known whether this protein is DNA sequence binding-specific or not. The protein is High mobility group protein homolog TDP-1 of Trypanosoma brucei rhodesiense.